The following is a 200-amino-acid chain: Membrane-spanning 4-domains subfamily A member 5 (200 aa).

The Cytoplasmic portion of the chain corresponds to 1–52; the sequence is MDSSTAHSPVFLVFPPEITASEYESTELSATTFSTQSPLQKLFARKMKILGT. The helical transmembrane segment at 53-73 threads the bilayer; sequence IQILFGIMTFSFGVIFLFTLL. Residues 74 to 80 lie on the Extracellular side of the membrane; it reads KPYPRFP. The chain crosses the membrane as a helical span at residues 81–101; the sequence is FIFLSGYPFWGSVLFINSGAF. Topologically, residues 102-120 are cytoplasmic; it reads LIAVKRKTTETLIILSRIM. The chain crosses the membrane as a helical span at residues 121 to 141; it reads NFLSALGAIAGIILLTFGFIL. Residues 142–159 lie on the Extracellular side of the membrane; it reads DQNYICGYSHQNSQCKAV. The chain crosses the membrane as a helical span at residues 160–180; sequence TVLFLGILITLMTFSIIELFI. The Cytoplasmic portion of the chain corresponds to 181-200; that stretch reads SLPFSILGCHSEDCDCEQCC.

The protein belongs to the MS4A family. As to expression, expressed at high level in the testis. Detected also in the pancreas, heart and in the brain.

It is found in the membrane. May be involved in signal transduction as a component of a multimeric receptor complex. The chain is Membrane-spanning 4-domains subfamily A member 5 (MS4A5) from Homo sapiens (Human).